Consider the following 465-residue polypeptide: FAD-dependent monooxygenase penM (465 aa).

Residues Q5–H25 form a helical membrane-spanning segment. Positions 35, 49, 108, 299, and 312 each coordinate FAD. A helical transmembrane segment spans residues V435–M455.

It belongs to the paxM FAD-dependent monooxygenase family. It depends on FAD as a cofactor.

Its subcellular location is the membrane. It participates in secondary metabolite biosynthesis. FAD-dependent monooxygenase; part of the gene cluster that mediates the biosynthesis of the indole diterpenes penitrems. The geranylgeranyl diphosphate (GGPP) synthase penG catalyzes the first step in penitrem biosynthesis via conversion of farnesyl pyrophosphate and isopentyl pyrophosphate into geranylgeranyl pyrophosphate (GGPP). Condensation of indole-3-glycerol phosphate with GGPP by the prenyl transferase penC then forms 3-geranylgeranylindole (3-GGI). Epoxidation by the FAD-dependent monooxygenase penM leads to a epoxidized-GGI that is substrate of the terpene cyclase penB for cyclization to yield paspaline. Paspaline is subsequently converted to 13-desoxypaxilline by the cytochrome P450 monooxygenase penP, the latter being then converted to paxilline by the cytochrome P450 monooxygenase penQ. Paxilline is converted to beta-paxitriol via C-10 ketoreduction by the short-chain dehydrogenase PC-15 which can be monoprenylated at the C-20 by the indole diterpene prenyltransferase penD. A two-step elimination (acetylation and elimination) process performed by the O-acetyltransferase PC-16 and the P.simplicissimum ptmI-ortholog not yet identified in P.crustosum, leads to the production of the prenylated form of penijanthine. The FAD-linked oxidoreductase ptmO then converts the prenylated form of penijanthine into PC-M5 which is in turn transformed into PC-M4 by the aromatic dimethylallyltransferase PC-22. A series of oxidation steps involving 4 cytochrome P450 monooxygenases (PC-21, PC-05, PC-23, PC-20) and a FAD-dependent monooxygenase (PC-14) are required for the transformation of PC-M4 to penitrems A and E. Synthesis of these final products is proposed to proceed via penitrems D and C (PC-21, PC-05, PC-14) and penitrems B and F (PC-21, PC-05, PC-14, PC-23). The chain is FAD-dependent monooxygenase penM from Penicillium crustosum (Blue mold fungus).